We begin with the raw amino-acid sequence, 756 residues long: 5-methyltetrahydropteroyltriglutamate--homocysteine methyltransferase (756 aa).

5-methyltetrahydropteroyltri-L-glutamate-binding positions include 16-19 (RELK) and lysine 116. Residues 433–435 (IGS) and glutamate 486 each bind L-homocysteine. L-methionine is bound by residues 433–435 (IGS) and glutamate 486. 5-methyltetrahydropteroyltri-L-glutamate contacts are provided by residues 517-518 (RC) and tryptophan 563. L-homocysteine is bound at residue aspartate 601. Aspartate 601 is an L-methionine binding site. Position 607 (glutamate 607) interacts with 5-methyltetrahydropteroyltri-L-glutamate. Zn(2+) contacts are provided by histidine 643, cysteine 645, and glutamate 667. Histidine 696 (proton donor) is an active-site residue. Cysteine 728 lines the Zn(2+) pocket.

The protein belongs to the vitamin-B12 independent methionine synthase family. Zn(2+) is required as a cofactor.

The enzyme catalyses 5-methyltetrahydropteroyltri-L-glutamate + L-homocysteine = tetrahydropteroyltri-L-glutamate + L-methionine. It functions in the pathway amino-acid biosynthesis; L-methionine biosynthesis via de novo pathway; L-methionine from L-homocysteine (MetE route): step 1/1. Functionally, catalyzes the transfer of a methyl group from 5-methyltetrahydrofolate to homocysteine resulting in methionine formation. The polypeptide is 5-methyltetrahydropteroyltriglutamate--homocysteine methyltransferase (Buchnera aphidicola subsp. Baizongia pistaciae (strain Bp)).